The sequence spans 118 residues: UPF0342 protein LCK_01004 (118 aa).

It belongs to the UPF0342 family.

This is UPF0342 protein LCK_01004 from Leuconostoc citreum (strain KM20).